Here is a 136-residue protein sequence, read N- to C-terminus: Ribosome-binding factor A (136 aa).

It belongs to the RbfA family. Monomer. Binds 30S ribosomal subunits, but not 50S ribosomal subunits or 70S ribosomes.

It localises to the cytoplasm. In terms of biological role, one of several proteins that assist in the late maturation steps of the functional core of the 30S ribosomal subunit. Associates with free 30S ribosomal subunits (but not with 30S subunits that are part of 70S ribosomes or polysomes). Required for efficient processing of 16S rRNA. May interact with the 5'-terminal helix region of 16S rRNA. The polypeptide is Ribosome-binding factor A (Cellvibrio japonicus (strain Ueda107) (Pseudomonas fluorescens subsp. cellulosa)).